A 255-amino-acid polypeptide reads, in one-letter code: Folate receptor beta (255 aa).

Residues 1-16 (MVWKWMPLLLLLVCVA) form the signal peptide. 8 disulfide bridges follow: C31/C59, C51/C99, C60/C103, C83/C169, C90/C140, C129/C203, C133/C183, and C146/C163. Positions 97 and 101 each coordinate folate. An N-linked (GlcNAc...) asparagine glycan is attached at N115. Folate contacts are provided by residues 118 to 122 (WRKER), 151 to 156 (HRGWDW), and S190. A glycan (N-linked (GlcNAc...) asparagine) is linked at N195. N230 is lipidated: GPI-anchor amidated asparagine. The propeptide at 231 to 255 (AGEMLHGTGGLLLSLALMLQLWLLG) is removed in mature form.

This sequence belongs to the folate receptor family. In terms of processing, N-glycosylated. Expressed in placenta and hematopoietic cells. Expression is increased in malignant tissues.

The protein resides in the cell membrane. Its subcellular location is the secreted. In terms of biological role, binds to folate and reduced folic acid derivatives and mediates delivery of 5-methyltetrahydrofolate and folate analogs into the interior of cells. Has high affinity for folate and folic acid analogs at neutral pH. Exposure to slightly acidic pH after receptor endocytosis triggers a conformation change that strongly reduces its affinity for folates and mediates their release. This Homo sapiens (Human) protein is Folate receptor beta (FOLR2).